Here is a 473-residue protein sequence, read N- to C-terminus: Phosphoglucosamine mutase (473 aa).

The active-site Phosphoserine intermediate is the S102. Mg(2+)-binding residues include S102, D248, D250, and D252. S102 is modified (phosphoserine).

The protein belongs to the phosphohexose mutase family. Mg(2+) serves as cofactor. Activated by phosphorylation.

The catalysed reaction is alpha-D-glucosamine 1-phosphate = D-glucosamine 6-phosphate. In terms of biological role, catalyzes the conversion of glucosamine-6-phosphate to glucosamine-1-phosphate. The sequence is that of Phosphoglucosamine mutase from Rhodospirillum centenum (strain ATCC 51521 / SW).